A 280-amino-acid polypeptide reads, in one-letter code: Bifunctional protein FolD (280 aa).

NADP(+)-binding positions include 164-166, Ser-189, and Val-230; that span reads GRS.

The protein belongs to the tetrahydrofolate dehydrogenase/cyclohydrolase family. As to quaternary structure, homodimer.

The enzyme catalyses (6R)-5,10-methylene-5,6,7,8-tetrahydrofolate + NADP(+) = (6R)-5,10-methenyltetrahydrofolate + NADPH. The catalysed reaction is (6R)-5,10-methenyltetrahydrofolate + H2O = (6R)-10-formyltetrahydrofolate + H(+). It functions in the pathway one-carbon metabolism; tetrahydrofolate interconversion. Functionally, catalyzes the oxidation of 5,10-methylenetetrahydrofolate to 5,10-methenyltetrahydrofolate and then the hydrolysis of 5,10-methenyltetrahydrofolate to 10-formyltetrahydrofolate. The polypeptide is Bifunctional protein FolD (Geotalea uraniireducens (strain Rf4) (Geobacter uraniireducens)).